We begin with the raw amino-acid sequence, 210 residues long: Phosphoribosyl-dephospho-CoA transferase (210 aa).

Active-site residues include Asp-135 and Asp-137.

This sequence belongs to the MdcG family.

The catalysed reaction is apo-[malonate decarboxylase ACP] + 2'-(5''-triphospho-alpha-D-ribosyl)-3'-dephospho-CoA = holo-[malonate decarboxylase ACP] + diphosphate. In terms of biological role, transfers 2'-(5-triphosphoribosyl)-3'-dephosphocoenzyme-A to the apo-[acyl-carrier-protein] of the malonate decarboxylase to yield holo-[acyl-carrier-protein]. The protein is Phosphoribosyl-dephospho-CoA transferase of Pseudomonas aeruginosa (strain ATCC 15692 / DSM 22644 / CIP 104116 / JCM 14847 / LMG 12228 / 1C / PRS 101 / PAO1).